A 275-amino-acid chain; its full sequence is Hemin import ATP-binding protein HmuV (275 aa).

One can recognise an ABC transporter domain in the interval 2–242; sequence LKAAGIGVRL…EWIETGFGLQ (241 aa). 34-41 contacts ATP; that stretch reads GPNGAGKS.

The protein belongs to the ABC transporter superfamily. Heme (hemin) importer (TC 3.A.1.14.5) family. The complex is composed of two ATP-binding proteins (HmuV), two transmembrane proteins (HmuU) and a solute-binding protein (HmuT).

The protein localises to the cell inner membrane. Part of the ABC transporter complex HmuTUV involved in hemin import. Responsible for energy coupling to the transport system. The chain is Hemin import ATP-binding protein HmuV from Gloeobacter violaceus (strain ATCC 29082 / PCC 7421).